The primary structure comprises 174 residues: Adenine phosphoribosyltransferase (174 aa).

Belongs to the purine/pyrimidine phosphoribosyltransferase family. In terms of assembly, homodimer.

The protein localises to the cytoplasm. It carries out the reaction AMP + diphosphate = 5-phospho-alpha-D-ribose 1-diphosphate + adenine. Its pathway is purine metabolism; AMP biosynthesis via salvage pathway; AMP from adenine: step 1/1. Its function is as follows. Catalyzes a salvage reaction resulting in the formation of AMP, that is energically less costly than de novo synthesis. The chain is Adenine phosphoribosyltransferase from Photobacterium profundum (strain SS9).